The chain runs to 206 residues: uncharacterized protein (206 aa).

The 170-residue stretch at 32-201 folds into the MurNAc-LAA domain; sequence VYIDAGHGGE…AADAIVNGID (170 aa).

The protein belongs to the N-acetylmuramoyl-L-alanine amidase 3 family.

This is an uncharacterized protein from Bacillus subtilis (strain 168).